The chain runs to 213 residues: Large ribosomal subunit protein uL1 (213 aa).

It belongs to the universal ribosomal protein uL1 family.

The sequence is that of Large ribosomal subunit protein uL1 (RPL10A) from Chlamydomonas reinhardtii (Chlamydomonas smithii).